We begin with the raw amino-acid sequence, 841 residues long: DNA mismatch repair protein MutS (841 aa).

596 to 603 contacts ATP; the sequence is GPNMSGKS.

This sequence belongs to the DNA mismatch repair MutS family.

Functionally, this protein is involved in the repair of mismatches in DNA. It is possible that it carries out the mismatch recognition step. This protein has a weak ATPase activity. The polypeptide is DNA mismatch repair protein MutS (Acholeplasma laidlawii (strain PG-8A)).